We begin with the raw amino-acid sequence, 239 residues long: Non-structural protein V (239 aa).

Disordered regions lie at residues 30 to 104 (PVET…ADEA) and 126 to 180 (NKSS…HRRE). The span at 65-74 (TPDRQDRSDK) shows a compositional bias: basic and acidic residues. Composition is skewed to polar residues over residues 89–98 (PATSTDQPPT) and 143–153 (ASSTSDSTAGE). 8 residues coordinate Zn(2+): H177, C196, C200, C212, C214, C217, C221, and C224.

As to quaternary structure, interacts with host STAT1. Interacts with host TXNL1. Interacts (via C-terminus) with host CacyBP; this interaction inhibits host cell apoptosis.

Its subcellular location is the host cytoplasm. It localises to the host nucleus. Its function is as follows. Protects the virus against cell antiviral state by blocking host interferon signaling. Mechanistically, targets host phosphorylated STAT1 (phospho-STAT1) for degradation, thereby inhibiting the interferon alpha signaling pathway. Plays a role in the inhibition of host apoptosis. Interacts with and down-regulates the expression of host TXNL1. In turn, inhibits TXNL1-induced apoptosis through the BCL2-BAX-caspase 3 pathway. Inhibits host apoptosis also by negatively regulating host CacyBP/SIP. Promotes viral replication by activating the extracellular signal-regulated kinase (ERK) pathway. The sequence is that of Non-structural protein V (P/V) from Gallus gallus (Chicken).